The sequence spans 487 residues: ATP synthase subunit beta 1 (487 aa).

162–169 (GGAGVGKT) is a binding site for ATP.

Belongs to the ATPase alpha/beta chains family. As to quaternary structure, F-type ATPases have 2 components, CF(1) - the catalytic core - and CF(0) - the membrane proton channel. CF(1) has five subunits: alpha(3), beta(3), gamma(1), delta(1), epsilon(1). CF(0) has three main subunits: a(1), b(2) and c(9-12). The alpha and beta chains form an alternating ring which encloses part of the gamma chain. CF(1) is attached to CF(0) by a central stalk formed by the gamma and epsilon chains, while a peripheral stalk is formed by the delta and b chains.

Its subcellular location is the cell inner membrane. It catalyses the reaction ATP + H2O + 4 H(+)(in) = ADP + phosphate + 5 H(+)(out). Produces ATP from ADP in the presence of a proton gradient across the membrane. The catalytic sites are hosted primarily by the beta subunits. This is ATP synthase subunit beta 1 from Gluconobacter oxydans (strain 621H) (Gluconobacter suboxydans).